The following is a 494-amino-acid chain: UPF0371 protein SUB1165 (494 aa).

The protein belongs to the UPF0371 family.

The polypeptide is UPF0371 protein SUB1165 (Streptococcus uberis (strain ATCC BAA-854 / 0140J)).